The following is a 252-amino-acid chain: Biosynthetic peptidoglycan transglycosylase (252 aa).

The chain crosses the membrane as a helical span at residues 23 to 43; the sequence is IGFLLGCIVAGVVAMQVYFFL.

Belongs to the glycosyltransferase 51 family.

The protein localises to the cell inner membrane. The catalysed reaction is [GlcNAc-(1-&gt;4)-Mur2Ac(oyl-L-Ala-gamma-D-Glu-L-Lys-D-Ala-D-Ala)](n)-di-trans,octa-cis-undecaprenyl diphosphate + beta-D-GlcNAc-(1-&gt;4)-Mur2Ac(oyl-L-Ala-gamma-D-Glu-L-Lys-D-Ala-D-Ala)-di-trans,octa-cis-undecaprenyl diphosphate = [GlcNAc-(1-&gt;4)-Mur2Ac(oyl-L-Ala-gamma-D-Glu-L-Lys-D-Ala-D-Ala)](n+1)-di-trans,octa-cis-undecaprenyl diphosphate + di-trans,octa-cis-undecaprenyl diphosphate + H(+). It functions in the pathway cell wall biogenesis; peptidoglycan biosynthesis. Its function is as follows. Peptidoglycan polymerase that catalyzes glycan chain elongation from lipid-linked precursors. This is Biosynthetic peptidoglycan transglycosylase from Cupriavidus pinatubonensis (strain JMP 134 / LMG 1197) (Cupriavidus necator (strain JMP 134)).